Here is a 126-residue protein sequence, read N- to C-terminus: Nucleoside diphosphate kinase B (126 aa).

Residues Lys-6, Phe-37, Thr-68, Arg-79, and Asn-89 each contribute to the ATP site. The active-site Pros-phosphohistidine intermediate is His-92.

It belongs to the NDK family. It depends on Mg(2+) as a cofactor.

Its subcellular location is the cytoplasm. The protein resides in the nucleus. The protein localises to the cell projection. It is found in the lamellipodium. It localises to the ruffle. The enzyme catalyses a 2'-deoxyribonucleoside 5'-diphosphate + ATP = a 2'-deoxyribonucleoside 5'-triphosphate + ADP. It carries out the reaction a ribonucleoside 5'-diphosphate + ATP = a ribonucleoside 5'-triphosphate + ADP. Its function is as follows. Major role in the synthesis of nucleoside triphosphates other than ATP. This is Nucleoside diphosphate kinase B (nme2) from Merluccius capensis (Shallow-water Cape hake).